Consider the following 452-residue polypeptide: Mannan endo-1,6-alpha-mannosidase DCW1 (452 aa).

A signal peptide spans 1 to 18 (MKFSIYLIISLFSSFSHA). N-linked (GlcNAc...) asparagine glycosylation is found at Asn-25, Asn-81, Asn-106, Asn-130, Asn-200, Asn-237, Asn-240, Asn-262, Asn-271, and Asn-286. Gly-431 carries the GPI-anchor amidated glycine lipid modification. Residues 432-452 (AGIITAIIGASLVGSCVWLIL) constitute a propeptide, removed in mature form.

It belongs to the glycosyl hydrolase 76 family.

It is found in the cell membrane. It carries out the reaction Random hydrolysis of (1-&gt;6)-alpha-D-mannosidic linkages in unbranched (1-&gt;6)-mannans.. Probable mannosidase required for normal synthesis of the cell wall. The chain is Mannan endo-1,6-alpha-mannosidase DCW1 (DCW1) from Candida albicans (strain SC5314 / ATCC MYA-2876) (Yeast).